We begin with the raw amino-acid sequence, 722 residues long: Methionine--tRNA ligase (722 aa).

Residues 11–21 (PYANGPIHAGH) carry the 'HIGH' region motif. Zn(2+) is bound by residues Cys-143, Cys-146, Cys-156, and Cys-159. Residues 344–348 (KFSTS) carry the 'KMSKS' region motif. Residue Thr-347 coordinates ATP. In terms of domain architecture, tRNA-binding spans 622-722 (DFAKLDLRVG…KEVKLGAKVR (101 aa)).

It belongs to the class-I aminoacyl-tRNA synthetase family. MetG type 1 subfamily. As to quaternary structure, homodimer. The cofactor is Zn(2+).

The protein resides in the cytoplasm. It catalyses the reaction tRNA(Met) + L-methionine + ATP = L-methionyl-tRNA(Met) + AMP + diphosphate. Is required not only for elongation of protein synthesis but also for the initiation of all mRNA translation through initiator tRNA(fMet) aminoacylation. The protein is Methionine--tRNA ligase of Pyrococcus abyssi (strain GE5 / Orsay).